The chain runs to 243 residues: Triosephosphate isomerase (243 aa).

9–11 serves as a coordination point for substrate; the sequence is NWK. Histidine 96 serves as the catalytic Electrophile. Glutamate 165 functions as the Proton acceptor in the catalytic mechanism. Residues glycine 171, serine 204, and 225–226 each bind substrate; that span reads GG.

Belongs to the triosephosphate isomerase family. In terms of assembly, homodimer.

The protein localises to the cytoplasm. It carries out the reaction D-glyceraldehyde 3-phosphate = dihydroxyacetone phosphate. It participates in carbohydrate biosynthesis; gluconeogenesis. Its pathway is carbohydrate degradation; glycolysis; D-glyceraldehyde 3-phosphate from glycerone phosphate: step 1/1. Functionally, involved in the gluconeogenesis. Catalyzes stereospecifically the conversion of dihydroxyacetone phosphate (DHAP) to D-glyceraldehyde-3-phosphate (G3P). This chain is Triosephosphate isomerase, found in Synechococcus sp. (strain WH7803).